The sequence spans 312 residues: DNA-directed RNA polymerase subunit alpha (312 aa).

The alpha N-terminal domain (alpha-NTD) stretch occupies residues 1–226 (MIEFEKPNIT…EHFKVFMSTD (226 aa)). The alpha C-terminal domain (alpha-CTD) stretch occupies residues 243–312 (NEKKLEMTIE…DLGLSLRQDD (70 aa)).

It belongs to the RNA polymerase alpha chain family. In terms of assembly, homodimer. The RNAP catalytic core consists of 2 alpha, 1 beta, 1 beta' and 1 omega subunit. When a sigma factor is associated with the core the holoenzyme is formed, which can initiate transcription.

The enzyme catalyses RNA(n) + a ribonucleoside 5'-triphosphate = RNA(n+1) + diphosphate. Its function is as follows. DNA-dependent RNA polymerase catalyzes the transcription of DNA into RNA using the four ribonucleoside triphosphates as substrates. In Lactobacillus johnsonii (strain CNCM I-12250 / La1 / NCC 533), this protein is DNA-directed RNA polymerase subunit alpha.